A 335-amino-acid chain; its full sequence is 3-ketodihydrosphingosine reductase TSC10 (335 aa).

Residues glycine 42, serine 44, serine 45, glycine 46, arginine 67, aspartate 68, lysine 71, aspartate 95, and leucine 96 each coordinate NADPH. The short motif at 42–46 is the GXSXG element; it reads GGSSG. The segment at 141–207 is involved in homodimer formation; the sequence is LKDGLDGVYW…RGLSDALRSE (67 aa). The active-site Proton acceptor is the tyrosine 190. 3 residues coordinate NADP(+): tyrosine 190, lysine 194, and isoleucine 223. Lysine 194 acts as the Lowers pKa of active site Tyr in catalysis. A helical membrane pass occupies residues 288–308; sequence TNNFLLDTLWLIVSSVGVPIW.

It belongs to the short-chain dehydrogenases/reductases (SDR) family. Homodimer; a minor portion forms homotetramers.

The protein localises to the endoplasmic reticulum membrane. The enzyme catalyses sphinganine + NADP(+) = 3-oxosphinganine + NADPH + H(+). The protein operates within lipid metabolism; sphingolipid metabolism. Catalyzes the reduction of 3'-oxosphinganine (3-ketodihydrosphingosine/KDS) to sphinganine (dihydrosphingosine/DHS), the second step of de novo sphingolipid biosynthesis. This is 3-ketodihydrosphingosine reductase TSC10 (TSC10) from Cryptococcus neoformans var. neoformans serotype D (strain JEC21 / ATCC MYA-565) (Filobasidiella neoformans).